The primary structure comprises 318 residues: Pheromone-regulated membrane protein 5 (318 aa).

The chain crosses the membrane as a helical span at residues 75-98 (GTVFIVVGGIAGVIFLAILLWWVI). S129 bears the Phosphoserine mark. The span at 238–247 (TISSSSASSL) shows a compositional bias: low complexity. Positions 238–318 (TISSSSASSL…HMLEGKEQDE (81 aa)) are disordered. A compositionally biased stretch (basic and acidic residues) spans 250–261 (GNEKEVGEDIRK). Residues 276–285 (SPESDGSVNR) are compositionally biased toward polar residues. 3 positions are modified to phosphoserine: S279, S282, and S288. The segment covering 309–318 (HMLEGKEQDE) has biased composition (basic and acidic residues). A Glycyl lysine isopeptide (Lys-Gly) (interchain with G-Cter in ubiquitin) cross-link involves residue K314.

It belongs to the PRM5 family.

It localises to the membrane. This chain is Pheromone-regulated membrane protein 5 (PRM5), found in Saccharomyces cerevisiae (strain ATCC 204508 / S288c) (Baker's yeast).